The following is a 478-amino-acid chain: MLKFYQMKYIFQILDKMRCLRKRSTVSFLGVLVVFLLFMNLYIEDSYVLEGDKQLIRETSTHQLNSERYVHTFKDLSNFSGTINVTYRYLAATPLQRKRYLTIGLSSVKRKKGNYLLDTIKSIFEQSSYEELKEISVVVHLADFNSSWRDAMVQDITQKFAHHIIAGRLMVIHAPEEYYPVLDGLKRNYNDPEDRVRFRSKQNVDYAFLLNFCANTSDYYVMLEDDVRCSRNFLTAIKKVIASLEGTYWVTLEFSKLGYIGKLYHSHDLPRLAHFLLMFYQEMPCDWLLTHFRGLLAQKNVIRFKPSLFQHMGYYSSYKGTENKLKDDDFEEESFDIPDNPPASFYTNMNVFENYEASKAYSSVDEYFWGKSPSMGDTFVIVFENPITIKKIKVNTGTEDRQNDILQHGALDVGEKLIFSKQIRQCDTYLRLGEFKNGYFEMSDVNQKIPFDIHCMRICVTKTQKEWLIIRSISIWTS.

At 1-25 (MLKFYQMKYIFQILDKMRCLRKRST) the chain is on the cytoplasmic side. The chain crosses the membrane as a helical; Signal-anchor for type II membrane protein span at residues 26–43 (VSFLGVLVVFLLFMNLYI). Residues 44–478 (EDSYVLEGDK…IIRSISIWTS (435 aa)) are Lumenal-facing. N-linked (GlcNAc...) asparagine glycosylation is found at N84 and N215.

This sequence belongs to the glycosyltransferase 54 family. A divalent metal cation is required as a cofactor.

Its subcellular location is the golgi apparatus membrane. The enzyme catalyses N(4)-{beta-D-GlcNAc-(1-&gt;2)-alpha-D-Man-(1-&gt;3)-[beta-D-GlcNAc-(1-&gt;2)-alpha-D-Man-(1-&gt;6)]-beta-D-Man-(1-&gt;4)-beta-D-GlcNAc-(1-&gt;4)-beta-D-GlcNAc}-L-asparaginyl-[protein] + UDP-N-acetyl-alpha-D-glucosamine = N(4)-{beta-D-GlcNAc-(1-&gt;2)-[beta-D-GlcNAc-(1-&gt;4)]-alpha-D-Man-(1-&gt;3)-[beta-D-GlcNAc-(1-&gt;2)-alpha-D-Man-(1-&gt;6)]-beta-D-Man-(1-&gt;4)-beta-D-GlcNAc-(1-&gt;4)-beta-D-GlcNAc}-L-asparaginyl-[protein] + UDP + H(+). It participates in protein modification; protein glycosylation. In terms of biological role, glycosyltransferase that participates in the transfer of N-acetylglucosamine (GlcNAc) to the core mannose residues of N-linked glycans. Catalyzes the formation of the GlcNAcbeta1-4 branch on the GlcNAcbeta1-2Manalpha1-3 arm of the core structure of N-linked glycans. Essential for the production of tri- and tetra-antennary N-linked sugar chains. Does not catalyze the transfer of GlcNAc to the Manalpha1-6 arm to form GlcNAcBeta1-4Manalpha1-6 linkage ('GnT-VI' activity). The chain is Alpha-1,3-mannosyl-glycoprotein 4-beta-N-acetylglucosaminyltransferase C (Mgat4c) from Mus musculus (Mouse).